The primary structure comprises 222 residues: Probable nicotinate-nucleotide adenylyltransferase (222 aa).

It belongs to the NadD family.

It catalyses the reaction nicotinate beta-D-ribonucleotide + ATP + H(+) = deamido-NAD(+) + diphosphate. It functions in the pathway cofactor biosynthesis; NAD(+) biosynthesis; deamido-NAD(+) from nicotinate D-ribonucleotide: step 1/1. Catalyzes the reversible adenylation of nicotinate mononucleotide (NaMN) to nicotinic acid adenine dinucleotide (NaAD). This is Probable nicotinate-nucleotide adenylyltransferase from Stenotrophomonas maltophilia (strain K279a).